A 255-amino-acid polypeptide reads, in one-letter code: Acetylglutamate kinase (255 aa).

Substrate-binding positions include 40-41, Arg62, and Asn153; that span reads GG.

The protein belongs to the acetylglutamate kinase family. ArgB subfamily.

It is found in the cytoplasm. The enzyme catalyses N-acetyl-L-glutamate + ATP = N-acetyl-L-glutamyl 5-phosphate + ADP. Its pathway is amino-acid biosynthesis; L-arginine biosynthesis; N(2)-acetyl-L-ornithine from L-glutamate: step 2/4. In terms of biological role, catalyzes the ATP-dependent phosphorylation of N-acetyl-L-glutamate. This is Acetylglutamate kinase from Bacillus cereus (strain ATCC 10987 / NRS 248).